Reading from the N-terminus, the 279-residue chain is ATP synthase gamma chain (279 aa).

This sequence belongs to the ATPase gamma chain family. F-type ATPases have 2 components, CF(1) - the catalytic core - and CF(0) - the membrane proton channel. CF(1) has five subunits: alpha(3), beta(3), gamma(1), delta(1), epsilon(1). CF(0) has three main subunits: a, b and c.

The protein resides in the cell membrane. In terms of biological role, produces ATP from ADP in the presence of a proton gradient across the membrane. The gamma chain is believed to be important in regulating ATPase activity and the flow of protons through the CF(0) complex. This is ATP synthase gamma chain from Mycoplasmopsis pulmonis (strain UAB CTIP) (Mycoplasma pulmonis).